We begin with the raw amino-acid sequence, 205 residues long: Large ribosomal subunit protein uL4 (205 aa).

The segment at 43-96 (GKRQGTSKVKNRSAVRGGGKKPWRQKGTGRARQGSIRSPQWRGGGTVFGPTPRS) is disordered. A compositionally biased stretch (basic residues) spans 51-71 (VKNRSAVRGGGKKPWRQKGTG).

It belongs to the universal ribosomal protein uL4 family. As to quaternary structure, part of the 50S ribosomal subunit.

One of the primary rRNA binding proteins, this protein initially binds near the 5'-end of the 23S rRNA. It is important during the early stages of 50S assembly. It makes multiple contacts with different domains of the 23S rRNA in the assembled 50S subunit and ribosome. In terms of biological role, forms part of the polypeptide exit tunnel. The polypeptide is Large ribosomal subunit protein uL4 (Lactobacillus helveticus (strain DPC 4571)).